Consider the following 68-residue polypeptide: Preprofallaxidin-5 (68 aa).

The signal sequence occupies residues 1–22 (MASLKKSLFLVLFLGFVSLSIC). Positions 23 to 51 (EEEKREDKEDEGENEEAEENHEERSEEKR) are excised as a propeptide. Residues 24–50 (EEKREDKEDEGENEEAEENHEERSEEK) are disordered. Residues 30–42 (KEDEGENEEAEEN) show a composition bias toward acidic residues. A Leucine amide modification is found at leucine 64. Serine 68 is a propeptide.

The protein belongs to the frog skin active peptide (FSAP) family. Brevinin subfamily. As to expression, expressed by the skin glands.

Its subcellular location is the secreted. In Litoria fallax (Eastern dwarf tree frog), this protein is Preprofallaxidin-5.